A 2207-amino-acid polypeptide reads, in one-letter code: MPSRKPSKYGNKFRSGAASFNPKRTKTVEFSSLRSSEATSQDEKFEAIRLANSIDESLGFPRFEAGEKRVGWLINMHSTSIEDPNVPGGRAGVDYYFLDDDGGSFKATVEYDPYFLIAVKTGHEAEVEEWCRRMFEGLIKKIKRVVKEDLKLPNHLLGHRRTFLQLDFANVSHLLEVRKTLLPLAEKNRKNARPNGTTNASDFIIDIREYDVPYHVRVAIDKDIRIGKWYTVEATHGIISLTCLEERLTRADPVVLAFDIETTKLPLKFPDSVIDQIMMISYMIDGQGFLITNREIVSEDIDDFEYTPKPEYSGPFMIFNEPNERAVIERFFEHIKEAKPTVIATYNGDFFDWPFVEARASVLGIDMYKEIGFRKNSEDIYQSDHCAHMDCFAWVNRDSYLPQGSRGLKAVTVAKLGYDPDELDPELMTPYASERPQTLAEYSVSDAVATYYLYMKYIHPFIFSLCTILPLNPDDTLRKGTGTLCEMLLMVQAYKGNIVLPNKHKDPPEAFYEGHLLESETYVGGHVESIEAGVFRSDIPVPFNIDPTAVDELLRDLDAALKFSIEVEEKKSLDDVTNYEEVKGQIAKLLTDLRENPHRNEVPFIYHLDVASMYPNIMITNRLQPDSLIQESNCAACDFNRPGKTCDRRLPWAWRGEFLPAKRDEYNMIRQAVQNERFPGRTKKSPMRAFTELSAEEQAAIVKKRLQDYSKKIYHKIHDSKTMVREAIICQRENPFYVDTVRSFRDRRYDFKGKQKVWKGKTESLKSSGAPAAEIEEAKKMIVLYDSLQLAHKVILNSFYGYVMRKGSRWYSMEMAGVTCLTGARIIQMARELVERIGRPLELDTDGIWCMLPGTFPENFSFTLKNGKKLGISYPCVMLNHLVHGSYTNHQYQSLANPATFRYETHSENSIFFEVDGPYRAMILPTSKEEDKNLKKRYAVFNDDGSLAELKGFEVKRRGELKLIKIFQTQIFKFFLEGTTLAETYAAVARVADRWLDVLYEHGATLADEELIELISENRSMTKTLEEYGNQKSTSITTARRLAEFLGEQMVKDKGLNCKYIISARPRNTPVTERAIPVTIFSAEDSIKRHFLRKWLKDDPGDMDPRSVIDWDYYLERLGSVVQKLITIPAALQKIRNPVPRVAHPEWLQRRINKQDDRFKQVKMTDMFGKSEKNPLSDISTNIIDHRVQHADNLDEAMADSMEKLKSSSPQKASGKRKHPENQTKTSLDPFASLPAKMPSIDDDYVGFLKYQKQKWKIQKQARLRRRQLFGERANTGGDSLSHLFRNQAELLYISTWQVLQLAETSRPGIVRAFVLIDRKIHALTIKVPRCVYINLKQDSLPDVEVPECEVEKVNHTLPNGHPSVHLFKLTLSEETFLREADKIHVLLQHPSVEGVYERNIPLNLRAVLKLGSICTFDEAQRGVLGDGLERGFDLSTLCRTSSEQQYLQDSPLAYHFLYHVSSGEKQIFAIFSSTKNEAHIVILNRARDVQGLPNVDKIYSELLARKLQGQGDQAEGAFQYQEKIHFRTTQITTRRKAYLEVSDLIKKLRNDESLPAIMIIQSQQRSRLCHDIPILKEYPILSVKPEVSDMNLPPLGWQSFIAKRLVTHYLYLSSWVQHLTMLARYGDVPLCNLESDDPRFLIDISYARRLQQNNVVLWWSSTAKPDHAGYEKDDITGPLERVGMPCVNVPGSYTTVCVELEVRNLAINTILTSSIINEAEGADSLLAPSDPSAESSGSGVLYSEKAFASAGAVVLREMVKHWWSEACQGNNMADIMVQHLIRWVESPASCLYDRSLHQYVRMLSRKSFQQLMAEFRRVGSNVVFASPTRLLLQTSKTEVGNAYAYSQYVLKSIRANPSFHFIDLDIKEYWDYLVWYDEYNYGGKGCQEVAETEEQPLETVMHWQLSRFLPTPMQTIFHDWVVEYIELMHSFKRPESDDSSTPRLTQIPIGQPEPGQENEELSAALSDRFSKPLKKQISGLIRRQREELLHPELASDYVFPILPGVLTDPNEEKRNPVLELVKLLMQVLSLSKTTALETRLLRRELLALFEVREFSKEGRFENPGSSLKIPELTCSACCLIRDLDLCRDEDVLPERGSGSGPDSATSSRPWCCPFCQTEYDRLAQEEMLIGQVWGMVVAWQTQDLKCSKCGTLKISEFMEHCSCSGQWTETMNRADIEKRLKVLESVAKFHELKLLQVVVEEVLSQT.

Disordered stretches follow at residues 1 to 20, 1201 to 1233, and 1934 to 1961; these read MPSR…AASF, SMEK…PFAS, and RPES…ENEE. Residues C2075, C2078, C2113, and C2116 each contribute to the Zn(2+) site. A CysA-type zinc finger spans residues 2075-2116; that stretch reads CSACCLIRDLDLCRDEDVLPERGSGSGPDSATSSRPWCCPFC. [4Fe-4S] cluster is bound by residues C2147, C2150, C2162, and C2164. The short motif at 2147–2164 is the CysB motif element; it reads CSKCGTLKISEFMEHCSC.

It belongs to the DNA polymerase type-B family. In terms of assembly, heterotetramer. Consists of 4 subunits: pol2, dpb2, dpb3 and dpb4. [4Fe-4S] cluster is required as a cofactor.

It localises to the nucleus. The enzyme catalyses DNA(n) + a 2'-deoxyribonucleoside 5'-triphosphate = DNA(n+1) + diphosphate. Its function is as follows. DNA polymerase II participates in chromosomal DNA replication. The chain is DNA polymerase epsilon catalytic subunit A (pol2) from Emericella nidulans (strain FGSC A4 / ATCC 38163 / CBS 112.46 / NRRL 194 / M139) (Aspergillus nidulans).